We begin with the raw amino-acid sequence, 259 residues long: Indole-3-glycerol phosphate synthase (259 aa).

Belongs to the TrpC family.

The catalysed reaction is 1-(2-carboxyphenylamino)-1-deoxy-D-ribulose 5-phosphate + H(+) = (1S,2R)-1-C-(indol-3-yl)glycerol 3-phosphate + CO2 + H2O. It participates in amino-acid biosynthesis; L-tryptophan biosynthesis; L-tryptophan from chorismate: step 4/5. The protein is Indole-3-glycerol phosphate synthase of Dehalococcoides mccartyi (strain ATCC BAA-2266 / KCTC 15142 / 195) (Dehalococcoides ethenogenes (strain 195)).